A 147-amino-acid polypeptide reads, in one-letter code: Sec-independent protein translocase protein TatB (147 aa).

The helical transmembrane segment at 1–21 (MFDVSFTELMVIGVIALVVIG) threads the bilayer. The tract at residues 67–147 (DETARSMQTS…DKTPPTGSAT (81 aa)) is disordered. Basic and acidic residues predominate over residues 93–103 (AELDDTARDAS). Low complexity-rich tracts occupy residues 109–120 (ADAPAEPAPAVA) and 129–147 (APPAAATPADKTPPTGSAT).

It belongs to the TatB family. In terms of assembly, the Tat system comprises two distinct complexes: a TatABC complex, containing multiple copies of TatA, TatB and TatC subunits, and a separate TatA complex, containing only TatA subunits. Substrates initially bind to the TatABC complex, which probably triggers association of the separate TatA complex to form the active translocon.

The protein resides in the cell inner membrane. Its function is as follows. Part of the twin-arginine translocation (Tat) system that transports large folded proteins containing a characteristic twin-arginine motif in their signal peptide across membranes. Together with TatC, TatB is part of a receptor directly interacting with Tat signal peptides. TatB may form an oligomeric binding site that transiently accommodates folded Tat precursor proteins before their translocation. This is Sec-independent protein translocase protein TatB from Bordetella pertussis (strain Tohama I / ATCC BAA-589 / NCTC 13251).